The primary structure comprises 175 residues: Disulfide bond formation protein B 2 (175 aa).

The Cytoplasmic portion of the chain corresponds to 1 to 9; that stretch reads MYLARTRFL. A helical transmembrane segment spans residues 10 to 26; the sequence is FFLASLACASIIGTAFY. Residues 27 to 44 lie on the Periplasmic side of the membrane; that stretch reads LQQTFGLDPCFLCLIQRA. Cys-36 and Cys-39 are joined by a disulfide. Residues 45–61 traverse the membrane as a helical segment; it reads AIIACGVLALCAACHAP. Residues 62 to 68 lie on the Cytoplasmic side of the membrane; that stretch reads GPTGMRR. A helical membrane pass occupies residues 69–85; it reads YSLGFLLIALTGLVTAG. At 86–142 the chain is on the periplasmic side; the sequence is AQVWLQTASADQLIPFITKLEHLLSLLSLDMCIDRLRSDAMFCAEITWTLFGISLPE. Residues 143 to 161 traverse the membrane as a helical segment; that stretch reads WSLLAFTGLALLPLYPLFS. Residues 162–175 are Cytoplasmic-facing; sequence EFSHWLATKDRARY.

Belongs to the DsbB family.

It localises to the cell inner membrane. In terms of biological role, required for disulfide bond formation in some periplasmic proteins. Acts by oxidizing the DsbA protein. This chain is Disulfide bond formation protein B 2, found in Pseudomonas savastanoi pv. phaseolicola (strain 1448A / Race 6) (Pseudomonas syringae pv. phaseolicola (strain 1448A / Race 6)).